Consider the following 197-residue polypeptide: Imidazoleglycerol-phosphate dehydratase (197 aa).

Belongs to the imidazoleglycerol-phosphate dehydratase family.

Its subcellular location is the cytoplasm. It carries out the reaction D-erythro-1-(imidazol-4-yl)glycerol 3-phosphate = 3-(imidazol-4-yl)-2-oxopropyl phosphate + H2O. It participates in amino-acid biosynthesis; L-histidine biosynthesis; L-histidine from 5-phospho-alpha-D-ribose 1-diphosphate: step 6/9. The polypeptide is Imidazoleglycerol-phosphate dehydratase (Rhodopseudomonas palustris (strain BisB5)).